The following is a 166-amino-acid chain: Co-chaperone protein HscB homolog (166 aa).

Residues 3–75 enclose the J domain; it reads QYFTLFRIEP…IDRAAYLLKT (73 aa).

This sequence belongs to the HscB family. As to quaternary structure, interacts with HscA and stimulates its ATPase activity.

In terms of biological role, co-chaperone involved in the maturation of iron-sulfur cluster-containing proteins. Seems to help targeting proteins to be folded toward HscA. The sequence is that of Co-chaperone protein HscB homolog from Neisseria gonorrhoeae (strain NCCP11945).